The following is a 137-amino-acid chain: MNITELMELFSNPETIKTLETGDLMTGIGVTVVLGMGITVVALIFLMYIIGGMAAIMAEKPKEVKETAAAAPKPEAAAAPAPAANNDEELVAVIAAAVAAQLGTSASNLIIRNVTRSLDTTPAWGRAGIVDQMATRL.

Residues 30–50 traverse the membrane as a helical segment; the sequence is VTVVLGMGITVVALIFLMYII.

Belongs to the OadG family. In terms of assembly, the methylmalonyl-CoA decarboxylase is composed of four subunits: the carboxyltransferase alpha subunit (MmdA), the tunnel beta subunit (MmdB), the biotin-containing gamma subunit (MmdC) and the delta subunit (MmdD).

The protein resides in the cell membrane. It catalyses the reaction (S)-methylmalonyl-CoA + Na(+)(in) + H(+)(out) = propanoyl-CoA + Na(+)(out) + CO2. Its function is as follows. Subunit of the sodium ion pump methylmalonyl-CoA decarboxylase, which converts the chemical energy of a decarboxylation reaction into an electrochemical gradient of Na(+) ions across the cytoplasmic membrane, thereby creating a sodium ion motive force that is used for ATP synthesis. The delta subunit is required for catalytic activity as well as for the proper assembly of the individual subunits to an enzyme complex. In Propionigenium modestum, this protein is Methylmalonyl-CoA decarboxylase subunit delta.